We begin with the raw amino-acid sequence, 753 residues long: 5-methyltetrahydropteroyltriglutamate--homocysteine methyltransferase (753 aa).

5-methyltetrahydropteroyltri-L-glutamate is bound by residues 17–20 and lysine 117; that span reads RELK. Residues 431–433 and glutamate 484 contribute to the L-homocysteine site; that span reads IGS. L-methionine is bound by residues 431–433 and glutamate 484; that span reads IGS. 5-methyltetrahydropteroyltri-L-glutamate contacts are provided by residues 515–516 and tryptophan 561; that span reads RC. Residue aspartate 599 coordinates L-homocysteine. Position 599 (aspartate 599) interacts with L-methionine. A 5-methyltetrahydropteroyltri-L-glutamate-binding site is contributed by glutamate 605. Residues histidine 641, cysteine 643, and glutamate 665 each contribute to the Zn(2+) site. Histidine 694 acts as the Proton donor in catalysis. Residue cysteine 726 coordinates Zn(2+).

The protein belongs to the vitamin-B12 independent methionine synthase family. The cofactor is Zn(2+).

The enzyme catalyses 5-methyltetrahydropteroyltri-L-glutamate + L-homocysteine = tetrahydropteroyltri-L-glutamate + L-methionine. It participates in amino-acid biosynthesis; L-methionine biosynthesis via de novo pathway; L-methionine from L-homocysteine (MetE route): step 1/1. Functionally, catalyzes the transfer of a methyl group from 5-methyltetrahydrofolate to homocysteine resulting in methionine formation. This Shigella dysenteriae serotype 1 (strain Sd197) protein is 5-methyltetrahydropteroyltriglutamate--homocysteine methyltransferase.